The chain runs to 240 residues: Uridylate kinase (240 aa).

An ATP-binding site is contributed by 12–15; sequence KLSG. A UMP-binding site is contributed by glycine 54. Positions 55 and 59 each coordinate ATP. Residues aspartate 74 and 135 to 142 each bind UMP; that span reads TGNPFFTT. 3 residues coordinate ATP: threonine 162, tyrosine 168, and aspartate 171.

Belongs to the UMP kinase family. In terms of assembly, homohexamer.

It localises to the cytoplasm. The enzyme catalyses UMP + ATP = UDP + ADP. It functions in the pathway pyrimidine metabolism; CTP biosynthesis via de novo pathway; UDP from UMP (UMPK route): step 1/1. Its activity is regulated as follows. Inhibited by UTP. Catalyzes the reversible phosphorylation of UMP to UDP. This Xanthomonas euvesicatoria pv. vesicatoria (strain 85-10) (Xanthomonas campestris pv. vesicatoria) protein is Uridylate kinase.